A 239-amino-acid chain; its full sequence is Ribosomal RNA small subunit methyltransferase G (239 aa).

S-adenosyl-L-methionine-binding positions include glycine 77, phenylalanine 82, 128–129 (AE), and arginine 146. The interval 214–239 (IDKKRQTPKKYPRKPGTPNKTPLLEK) is disordered.

This sequence belongs to the methyltransferase superfamily. RNA methyltransferase RsmG family.

It is found in the cytoplasm. Functionally, specifically methylates the N7 position of guanine in position 535 of 16S rRNA. The protein is Ribosomal RNA small subunit methyltransferase G of Staphylococcus aureus (strain Mu3 / ATCC 700698).